The sequence spans 538 residues: Putative cysteine ligase BshC (538 aa).

Residues 462–533 (LDHLEKRLLK…DPLESNFKIL (72 aa)) adopt a coiled-coil conformation.

The protein belongs to the BshC family.

This chain is Putative cysteine ligase BshC, found in Christiangramia forsetii (strain DSM 17595 / CGMCC 1.15422 / KT0803) (Gramella forsetii).